Here is a 198-residue protein sequence, read N- to C-terminus: tRNA (pseudouridine(54)-N(1))-methyltransferase (198 aa).

Leucine 128 contributes to the S-adenosyl-L-methionine binding site.

This sequence belongs to the methyltransferase superfamily. TrmY family. Homodimer.

It localises to the cytoplasm. The catalysed reaction is pseudouridine(54) in tRNA + S-adenosyl-L-methionine = N(1)-methylpseudouridine(54) in tRNA + S-adenosyl-L-homocysteine + H(+). Its function is as follows. Specifically catalyzes the N1-methylation of pseudouridine at position 54 (Psi54) in tRNAs. This chain is tRNA (pseudouridine(54)-N(1))-methyltransferase, found in Natronomonas pharaonis (strain ATCC 35678 / DSM 2160 / CIP 103997 / JCM 8858 / NBRC 14720 / NCIMB 2260 / Gabara) (Halobacterium pharaonis).